A 350-amino-acid polypeptide reads, in one-letter code: S-adenosylmethionine:tRNA ribosyltransferase-isomerase (350 aa).

Belongs to the QueA family. Monomer.

Its subcellular location is the cytoplasm. It catalyses the reaction 7-aminomethyl-7-carbaguanosine(34) in tRNA + S-adenosyl-L-methionine = epoxyqueuosine(34) in tRNA + adenine + L-methionine + 2 H(+). The protein operates within tRNA modification; tRNA-queuosine biosynthesis. Functionally, transfers and isomerizes the ribose moiety from AdoMet to the 7-aminomethyl group of 7-deazaguanine (preQ1-tRNA) to give epoxyqueuosine (oQ-tRNA). This Vibrio campbellii (strain ATCC BAA-1116) protein is S-adenosylmethionine:tRNA ribosyltransferase-isomerase.